A 632-amino-acid polypeptide reads, in one-letter code: U-box domain-containing protein 14 (632 aa).

The U-box domain occupies 247–321 (VIPEYFRCPI…ALWCESNGIE (75 aa)). 5 ARM repeats span residues 377-416 (VDNR…NLSI), 418-457 (EGNK…SLSV), 459-498 (DENK…NLCI), 500-539 (QGNK…ILST), and 541-580 (QEGK…YLCI).

Homodimer. Interacts with SNL1. Binds to SD11, SD16, SD17, SD18, SD113, SD129 and SD25. In terms of tissue distribution, expressed in flowers, green siliques, seeds and rosette leaves.

It catalyses the reaction S-ubiquitinyl-[E2 ubiquitin-conjugating enzyme]-L-cysteine + [acceptor protein]-L-lysine = [E2 ubiquitin-conjugating enzyme]-L-cysteine + N(6)-ubiquitinyl-[acceptor protein]-L-lysine.. It functions in the pathway protein modification; protein ubiquitination. In terms of biological role, functions as an E3 ubiquitin ligase with specific E2 ubiquitin-conjugating enzymes. Undergoes auto-ubiquitination. The protein is U-box domain-containing protein 14 (PUB14) of Arabidopsis thaliana (Mouse-ear cress).